The primary structure comprises 1045 residues: Pre-mRNA-splicing factor ATP-dependent RNA helicase DHX16 (1045 aa).

Residues 101-211 (EDSEESSEEA…ERSDKKAYEE (111 aa)) form a disordered region. Phosphoserine occurs at positions 103, 106, and 107. Over residues 119–131 (QKKRKKRKHLRKK) the composition is skewed to basic residues. Over residues 135–144 (EEEEEEEEEV) the composition is skewed to acidic residues. A Phosphoserine modification is found at Ser164. The segment covering 170 to 211 (RTERERLQDLEERDAFAERVRQRDKDRTRNVLERSDKKAYEE) has biased composition (basic and acidic residues). The Helicase ATP-binding domain occupies 413–577 (LAAVANHQIL…FDDAPVFRIP (165 aa)). Residue 426 to 433 (GETGSGKT) participates in ATP binding. The DEAH box signature appears at 524–527 (DEAH). One can recognise a Helicase C-terminal domain in the interval 602–775 (SVLQIHVTQP…NVVLLLKSLG (174 aa)). Thr716 bears the Phosphothreonine mark. The tract at residues 1026 to 1045 (EDPHAKKMPKKTGKTREELG) is disordered.

This sequence belongs to the DEAD box helicase family. DEAH subfamily. DDX16/PRP8 sub-subfamily. In terms of assembly, component of pre-catalytic spliceosome complexes. Component of the minor spliceosome, which splices U12-type introns. Interacts with GPKOW. Interacts with TRIM6. Interacts with RIGI.

The protein localises to the nucleus. Its subcellular location is the nucleoplasm. The protein resides in the cytoplasm. The catalysed reaction is ATP + H2O = ADP + phosphate + H(+). Required for pre-mRNA splicing as a component of the spliceosome. Contributes to pre-mRNA splicing after spliceosome formation and prior to the first transesterification reaction. As a component of the minor spliceosome, involved in the splicing of U12-type introns in pre-mRNAs. Also plays a role in innate antiviral response by acting as a pattern recognition receptor sensing splicing signals in viral RNA. Mechanistically, TRIM6 promotes the interaction between unanchored 'Lys-48'-polyubiquitin chains and DHX16, leading to DHX16 interaction with RIGI and ssRNA to amplify RIGI-dependent innate antiviral immune responses. In Sus scrofa (Pig), this protein is Pre-mRNA-splicing factor ATP-dependent RNA helicase DHX16 (DHX16).